Here is a 106-residue protein sequence, read N- to C-terminus: Acidic phospholipase A2 PhTX-III (106 aa).

Residues Y23, G25, and G27 each coordinate Ca(2+). Cystine bridges form between C24–C40, C39–C75, C45–C106, C46–C68, and C55–C66. H43 is an active-site residue. Residue D44 participates in Ca(2+) binding. Residue D69 is part of the active site.

Ca(2+) is required as a cofactor. Expressed by the venom gland.

The protein resides in the secreted. The enzyme catalyses a 1,2-diacyl-sn-glycero-3-phosphocholine + H2O = a 1-acyl-sn-glycero-3-phosphocholine + a fatty acid + H(+). Partially inhibited by magnesium ions and completely inhibited by zinc ions These divalent cations may act as competitive antagonists of the cofactor. Snake venom phospholipase A2 (PLA2) that induces inflammatory response, with local edema and release of cytokines IL-1 alpha, IL-6 and TNF-alpha. Does not exhibit myotoxic, anticoagulant and antibacterial effects. Release of pro-inflammatory cytokines may be due to mast cell degranulation, and edema may be induced by arachidonic acid that results from the PLA2 catalytic activity. PLA2 catalyzes the calcium-dependent hydrolysis of the 2-acyl groups in 3-sn-phosphoglycerides. In Bothrocophias hyoprora (Amazonian hognose viper), this protein is Acidic phospholipase A2 PhTX-III.